Reading from the N-terminus, the 280-residue chain is 2,3,4,5-tetrahydropyridine-2,6-dicarboxylate N-succinyltransferase (280 aa).

Residues Arg107 and Asp144 each coordinate substrate.

Belongs to the transferase hexapeptide repeat family. Homotrimer.

It is found in the cytoplasm. The enzyme catalyses (S)-2,3,4,5-tetrahydrodipicolinate + succinyl-CoA + H2O = (S)-2-succinylamino-6-oxoheptanedioate + CoA. It participates in amino-acid biosynthesis; L-lysine biosynthesis via DAP pathway; LL-2,6-diaminopimelate from (S)-tetrahydrodipicolinate (succinylase route): step 1/3. This is 2,3,4,5-tetrahydropyridine-2,6-dicarboxylate N-succinyltransferase from Paramagnetospirillum magneticum (strain ATCC 700264 / AMB-1) (Magnetospirillum magneticum).